A 146-amino-acid polypeptide reads, in one-letter code: NADH-quinone oxidoreductase subunit A (146 aa).

Transmembrane regions (helical) follow at residues 14–34, 66–86, and 96–116; these read FAVF…GAFF, FYLV…LYAW, and VGFI…VYLV.

It belongs to the complex I subunit 3 family. In terms of assembly, NDH-1 is composed of 13 different subunits. Subunits NuoA, H, J, K, L, M, N constitute the membrane sector of the complex.

The protein localises to the cell inner membrane. The catalysed reaction is a quinone + NADH + 5 H(+)(in) = a quinol + NAD(+) + 4 H(+)(out). Functionally, NDH-1 shuttles electrons from NADH, via FMN and iron-sulfur (Fe-S) centers, to quinones in the respiratory chain. The immediate electron acceptor for the enzyme in this species is believed to be ubiquinone. Couples the redox reaction to proton translocation (for every two electrons transferred, four hydrogen ions are translocated across the cytoplasmic membrane), and thus conserves the redox energy in a proton gradient. The polypeptide is NADH-quinone oxidoreductase subunit A (Serratia proteamaculans (strain 568)).